We begin with the raw amino-acid sequence, 500 residues long: Prostacyclin synthase (500 aa).

Residues 1-20 (MAWAALLGLLAALLLLLLLS) form a helical membrane-spanning segment. Residues R106, L112, N287, 358–359 (TR), and R382 contribute to the substrate site. Residue C441 participates in heme binding.

The protein belongs to the cytochrome P450 family. The cofactor is heme. As to expression, widely expressed; particularly abundant in ovary, heart, skeletal muscle, lung and prostate.

Its subcellular location is the endoplasmic reticulum membrane. The enzyme catalyses prostaglandin H2 = prostaglandin I2. It catalyses the reaction a hydroperoxyeicosatetraenoate = an oxoeicosatetraenoate + H2O. The catalysed reaction is (15S)-hydroperoxy-(5Z,8Z,11Z,13E)-eicosatetraenoate = 15-oxo-(5Z,8Z,11Z,13E)-eicosatetraenoate + H2O. It carries out the reaction (15S)-hydroperoxy-(5Z,8Z,11Z,13E)-eicosatetraenoate + AH2 = (15S)-hydroxy-(5Z,8Z,11Z,13E)-eicosatetraenoate + A + H2O. Catalyzes the biosynthesis and metabolism of eicosanoids. Catalyzes the isomerization of prostaglandin H2 to prostacyclin (= prostaglandin I2), a potent mediator of vasodilation and inhibitor of platelet aggregation. Additionally, displays dehydratase activity, toward hydroperoxyeicosatetraenoates (HPETEs), especially toward (15S)-hydroperoxy-(5Z,8Z,11Z,13E)-eicosatetraenoate (15(S)-HPETE). This is Prostacyclin synthase (PTGIS) from Homo sapiens (Human).